The following is a 456-amino-acid chain: uncharacterized protein (456 aa).

The TRAM domain occupies 5 to 63 (LVKKGQQISLKIKRLGINGEGIGYYKKLIIFVPGALPKEEVTATITNVTPKFAEGTLQS). C76, C82, C85, and C165 together coordinate [4Fe-4S] cluster. S-adenosyl-L-methionine-binding residues include Q289, Y318, D339, and D387. C414 (nucleophile) is an active-site residue.

The protein belongs to the class I-like SAM-binding methyltransferase superfamily. RNA M5U methyltransferase family.

This is an uncharacterized protein from Enterococcus faecalis (strain ATCC 700802 / V583).